The chain runs to 107 residues: uncharacterized protein (107 aa).

Residues 9 to 31 traverse the membrane as a helical segment; it reads AAAIITAPTILAMMSTVLRALIF.

It localises to the membrane. This is an uncharacterized protein from Archaeoglobus fulgidus (strain ATCC 49558 / DSM 4304 / JCM 9628 / NBRC 100126 / VC-16).